Consider the following 113-residue polypeptide: Hemerythrin (113 aa).

The Fe cation site is built by His25, His54, Glu58, His73, His77, His101, and Asp106.

Belongs to the hemerythrin family. Homooctamer.

Hemerythrin is a respiratory protein in blood cells of certain marine worms. The oxygen-binding site in each chain contains two iron atoms. The sequence is that of Hemerythrin from Themiste dyscrita (Peanut worm).